The following is a 134-amino-acid chain: Profilin-3 (134 aa).

Cys13 and Cys118 are joined by a disulfide. The short motif at 84–100 is the Involved in PIP2 interaction element; that stretch reads AVIRGKKGSGGITIKKT. Thr114 bears the Phosphothreonine mark.

Belongs to the profilin family. In terms of assembly, occurs in many kinds of cells as a complex with monomeric actin in a 1:1 ratio. Post-translationally, phosphorylated by MAP kinases.

Its subcellular location is the cytoplasm. It localises to the cytoskeleton. Functionally, binds to actin and affects the structure of the cytoskeleton. At high concentrations, profilin prevents the polymerization of actin, whereas it enhances it at low concentrations. The protein is Profilin-3 of Olea europaea (Common olive).